The following is a 198-amino-acid chain: Recombination protein RecR (198 aa).

The segment at 56 to 71 (CEICGNVSEQATCSIC) adopts a C4-type zinc-finger fold. One can recognise a Toprim domain in the interval 79-174 (ALICVVEEAK…RVTRLASGLP (96 aa)).

It belongs to the RecR family.

Its function is as follows. May play a role in DNA repair. It seems to be involved in an RecBC-independent recombinational process of DNA repair. It may act with RecF and RecO. This Leifsonia xyli subsp. xyli (strain CTCB07) protein is Recombination protein RecR.